Reading from the N-terminus, the 171-residue chain is 3-hydroxydecanoyl-[acyl-carrier-protein] dehydratase (171 aa).

His70 is a catalytic residue.

This sequence belongs to the thioester dehydratase family. FabA subfamily. In terms of assembly, homodimer.

Its subcellular location is the cytoplasm. The catalysed reaction is a (3R)-hydroxyacyl-[ACP] = a (2E)-enoyl-[ACP] + H2O. It catalyses the reaction (3R)-hydroxydecanoyl-[ACP] = (2E)-decenoyl-[ACP] + H2O. The enzyme catalyses (2E)-decenoyl-[ACP] = (3Z)-decenoyl-[ACP]. Its pathway is lipid metabolism; fatty acid biosynthesis. In terms of biological role, necessary for the introduction of cis unsaturation into fatty acids. Catalyzes the dehydration of (3R)-3-hydroxydecanoyl-ACP to E-(2)-decenoyl-ACP and then its isomerization to Z-(3)-decenoyl-ACP. Can catalyze the dehydratase reaction for beta-hydroxyacyl-ACPs with saturated chain lengths up to 16:0, being most active on intermediate chain length. This chain is 3-hydroxydecanoyl-[acyl-carrier-protein] dehydratase, found in Xanthomonas euvesicatoria pv. vesicatoria (strain 85-10) (Xanthomonas campestris pv. vesicatoria).